The following is a 254-amino-acid chain: 5'-nucleotidase SurE (254 aa).

A divalent metal cation-binding residues include D8, D9, S39, and N91.

This sequence belongs to the SurE nucleotidase family. It depends on a divalent metal cation as a cofactor.

It is found in the cytoplasm. The catalysed reaction is a ribonucleoside 5'-phosphate + H2O = a ribonucleoside + phosphate. In terms of biological role, nucleotidase that shows phosphatase activity on nucleoside 5'-monophosphates. This chain is 5'-nucleotidase SurE, found in Methylibium petroleiphilum (strain ATCC BAA-1232 / LMG 22953 / PM1).